The primary structure comprises 448 residues: Adenylosuccinate synthetase (448 aa).

GTP is bound by residues 22-28 (GDEGKGK) and 50-52 (GHT). The Proton acceptor role is filled by Asp-23. Asp-23 and Gly-50 together coordinate Mg(2+). IMP contacts are provided by residues 23-26 (DEGK), 48-51 (NAGH), Thr-139, Arg-153, Gln-234, Thr-249, and Arg-321. His-51 acts as the Proton donor in catalysis. A substrate-binding site is contributed by 317-323 (SVTGRPR). GTP is bound by residues Arg-323, 349–351 (KLD), and 431–433 (STG).

The protein belongs to the adenylosuccinate synthetase family. Homodimer. Requires Mg(2+) as cofactor.

It is found in the cytoplasm. It catalyses the reaction IMP + L-aspartate + GTP = N(6)-(1,2-dicarboxyethyl)-AMP + GDP + phosphate + 2 H(+). Its pathway is purine metabolism; AMP biosynthesis via de novo pathway; AMP from IMP: step 1/2. In terms of biological role, plays an important role in the de novo pathway of purine nucleotide biosynthesis. Catalyzes the first committed step in the biosynthesis of AMP from IMP. The protein is Adenylosuccinate synthetase of Paraburkholderia phymatum (strain DSM 17167 / CIP 108236 / LMG 21445 / STM815) (Burkholderia phymatum).